Reading from the N-terminus, the 955-residue chain is Kinesin heavy chain isoform 5C (955 aa).

The 320-residue stretch at 8–327 (SIKVMCRFRP…LMFGQRAKTI (320 aa)) folds into the Kinesin motor domain. ATP-binding residues include Gln-87, Ser-89, Ser-90, Gly-91, Lys-92, Thr-93, His-94, and Lys-99. Residues 174 to 315 (VSSPEEVMDV…PSVFNEAETK (142 aa)) form a microtubule-binding region. Positions 332 to 366 (SVNLELTAEEWKKKYEKEKEKNKALKSVIQHLEVE) form a coiled coil. Thr-403 is modified (phosphothreonine). Coiled coils occupy residues 413–538 (KEKY…LQEL) and 590–913 (ISKM…KNMA). The interval 859–955 (CELPKLEKRL…GSSNSTHYQK (97 aa)) is globular. Residues 909-955 (AKNMARRAHSAQIAKPIRPGHYPASSPTAVHAVRGGGGSSNSTHYQK) form a disordered region.

The protein belongs to the TRAFAC class myosin-kinesin ATPase superfamily. Kinesin family. Kinesin subfamily. In terms of assembly, oligomer composed of two heavy chains and two light chains. Interacts with GRIP1. Interacts with TRAK1. Interacts with ZFYVE27. Interacts with KLC3.

It is found in the cytoplasm. The protein resides in the cytoskeleton. It localises to the cell projection. The protein localises to the dendrite. The catalysed reaction is ATP + H2O = ADP + phosphate + H(+). Microtubule-associated force-producing protein that may play a role in organelle transport. Has ATPase activity. Involved in synaptic transmission. Mediates dendritic trafficking of mRNAs. Required for anterograde axonal transportation of MAPK8IP3/JIP3 which is essential for MAPK8IP3/JIP3 function in axon elongation. In Rattus norvegicus (Rat), this protein is Kinesin heavy chain isoform 5C (Kif5c).